A 209-amino-acid chain; its full sequence is NADH-quinone oxidoreductase subunit C (209 aa).

It belongs to the complex I 30 kDa subunit family. As to quaternary structure, NDH-1 is composed of 14 different subunits. Subunits NuoB, C, D, E, F, and G constitute the peripheral sector of the complex.

The protein resides in the cell inner membrane. It catalyses the reaction a quinone + NADH + 5 H(+)(in) = a quinol + NAD(+) + 4 H(+)(out). Functionally, NDH-1 shuttles electrons from NADH, via FMN and iron-sulfur (Fe-S) centers, to quinones in the respiratory chain. The immediate electron acceptor for the enzyme in this species is believed to be ubiquinone. Couples the redox reaction to proton translocation (for every two electrons transferred, four hydrogen ions are translocated across the cytoplasmic membrane), and thus conserves the redox energy in a proton gradient. The chain is NADH-quinone oxidoreductase subunit C from Phenylobacterium zucineum (strain HLK1).